Here is a 281-residue protein sequence, read N- to C-terminus: Undecaprenyl-diphosphatase (281 aa).

Transmembrane regions (helical) follow at residues 2–22 (FDLI…FLPV), 46–66 (AFSS…VIQL), 93–113 (VIVG…FMDA), 115–135 (LMNF…FIVI), 152–172 (ITFK…VPGT), 190–210 (FVAA…VTFL), 228–248 (IVML…IKFM), and 259–279 (VFGY…ILGI).

It belongs to the UppP family.

It is found in the cell membrane. The enzyme catalyses di-trans,octa-cis-undecaprenyl diphosphate + H2O = di-trans,octa-cis-undecaprenyl phosphate + phosphate + H(+). Its function is as follows. Catalyzes the dephosphorylation of undecaprenyl diphosphate (UPP). Confers resistance to bacitracin. The polypeptide is Undecaprenyl-diphosphatase (Leuconostoc mesenteroides subsp. mesenteroides (strain ATCC 8293 / DSM 20343 / BCRC 11652 / CCM 1803 / JCM 6124 / NCDO 523 / NBRC 100496 / NCIMB 8023 / NCTC 12954 / NRRL B-1118 / 37Y)).